Reading from the N-terminus, the 588-residue chain is Zinc finger protein 599 (588 aa).

The KRAB domain occupies Val9–Ala80. 14 consecutive C2H2-type zinc fingers follow at residues Tyr199–His221, Tyr227–His249, Tyr255–His277, Tyr283–His305, Phe311–His333, Tyr339–His361, Phe367–His389, Tyr395–His417, Phe423–His445, Tyr451–His473, Leu479–His501, Tyr507–His529, Phe535–His557, and Phe563–His585.

It belongs to the krueppel C2H2-type zinc-finger protein family.

It localises to the nucleus. In terms of biological role, may be involved in transcriptional regulation. This is Zinc finger protein 599 (ZNF599) from Homo sapiens (Human).